Here is a 391-residue protein sequence, read N- to C-terminus: Shewanella-like protein phosphatase 2 (391 aa).

Mn(2+) contacts are provided by aspartate 61, histidine 63, aspartate 97, and asparagine 132. The active-site Proton donor is the histidine 133. Mn(2+) contacts are provided by histidine 232 and histidine 295.

It belongs to the metallophosphoesterase superfamily. SLP family. Requires Mn(2+) as cofactor. As to expression, expressed in roots and siliques (at protein level).

It localises to the cytoplasm. It is found in the cytosol. Functionally, shows phosphatase activity, hydrolyzing the artificial substrate para-nitrophenylphosphate (pNPP) in vitro. The protein is Shewanella-like protein phosphatase 2 of Arabidopsis thaliana (Mouse-ear cress).